The following is a 268-amino-acid chain: Very-long-chain aldehyde decarbonylase GL1-8 (268 aa).

Transmembrane regions (helical) follow at residues 26–46, 70–90, 107–127, and 164–184; these read IGTFLLHESVFFLSGLPSLLF, CVVRLVLYHVCVNLPLTILSY, WTVVVSQVLFFFVLEDFIFYW, and ILFLGFATVAGPALTGPHLFT. The region spanning 114–249 is the Fatty acid hydroxylase domain; sequence VLFFFVLEDF…FIYMDWLFGT (136 aa).

It belongs to the sterol desaturase family. In terms of assembly, homodimer.

It localises to the endoplasmic reticulum membrane. The catalysed reaction is a long-chain fatty aldehyde + 2 NADPH + O2 + H(+) = a long-chain alkane + formate + 2 NADP(+) + H2O. Its function is as follows. Aldehyde decarbonylase involved in the conversion of aldehydes to alkanes. Core component of a very-long-chain alkane synthesis complex. This Oryza sativa subsp. indica (Rice) protein is Very-long-chain aldehyde decarbonylase GL1-8.